A 194-amino-acid polypeptide reads, in one-letter code: Endonuclease V (194 aa).

2 residues coordinate Mg(2+): D31 and E95.

The protein belongs to the endonuclease V family. Mg(2+) is required as a cofactor.

The protein resides in the cytoplasm. It carries out the reaction Endonucleolytic cleavage at apurinic or apyrimidinic sites to products with a 5'-phosphate.. DNA repair enzyme involved in the repair of deaminated bases. Selectively cleaves double-stranded DNA at the second phosphodiester bond 3' to a deoxyinosine leaving behind the intact lesion on the nicked DNA. The protein is Endonuclease V of Pyrococcus abyssi (strain GE5 / Orsay).